The sequence spans 606 residues: Large subunit GTPase 1 homolog (606 aa).

The tract at residues 1–21 (MGKKNKGGAPNLGRQLIKDRF) is disordered. A CP-type G domain is found at 165 to 395 (WRQLWRVVER…LCDCPGLVMP (231 aa)). Residue 213-216 (NKSD) coordinates GTP. S276 and S279 each carry phosphoserine. GTP is bound by residues 344–351 (GYPNVGKS) and 388–391 (DCPG). The tract at residues 574 to 606 (LVAGNDPAAKPWRHVKKERREKLRKKFSHLDEH) is disordered. A compositionally biased stretch (basic residues) spans 584–600 (PWRHVKKERREKLRKKF).

This sequence belongs to the TRAFAC class YlqF/YawG GTPase family. LSG1 subfamily. As to expression, expressed in larval serotonergic neurons.

Its subcellular location is the cytoplasm. GTPase required for the nuclear export of the 60S ribosomal subunit. Probably acts by mediating the release of Nmd3 from the 60S ribosomal subunit after export into the cytoplasm. Regulator of body size; acts in serotonergic neurons to regulate insulin signaling and thus exerts global growth control. The polypeptide is Large subunit GTPase 1 homolog (Ns3) (Drosophila melanogaster (Fruit fly)).